The chain runs to 247 residues: Ribosomal RNA large subunit methyltransferase E (247 aa).

A disordered region spans residues 1–21; that stretch reads MKVNPKNSPKDNLKDSPKVSA. The segment covering 8 to 17 has biased composition (basic and acidic residues); the sequence is SPKDNLKDSP. Residues glycine 80, tryptophan 82, aspartate 108, aspartate 124, and aspartate 153 each coordinate S-adenosyl-L-methionine. Catalysis depends on lysine 193, which acts as the Proton acceptor.

Belongs to the class I-like SAM-binding methyltransferase superfamily. RNA methyltransferase RlmE family.

The protein localises to the cytoplasm. It catalyses the reaction uridine(2552) in 23S rRNA + S-adenosyl-L-methionine = 2'-O-methyluridine(2552) in 23S rRNA + S-adenosyl-L-homocysteine + H(+). Specifically methylates the uridine in position 2552 of 23S rRNA at the 2'-O position of the ribose in the fully assembled 50S ribosomal subunit. The polypeptide is Ribosomal RNA large subunit methyltransferase E (Polaromonas sp. (strain JS666 / ATCC BAA-500)).